The sequence spans 850 residues: Protein translocase subunit SecA (850 aa).

Residues Gln-87, 105–109 (GEGKT), and Asp-494 contribute to the ATP site. Residues Cys-834, Cys-836, Cys-845, and Cys-846 each coordinate Zn(2+).

This sequence belongs to the SecA family. As to quaternary structure, monomer and homodimer. Part of the essential Sec protein translocation apparatus which comprises SecA, SecYEG and auxiliary proteins SecDF-YajC and YidC. Zn(2+) is required as a cofactor.

Its subcellular location is the cell inner membrane. The protein localises to the cytoplasm. The enzyme catalyses ATP + H2O + cellular proteinSide 1 = ADP + phosphate + cellular proteinSide 2.. In terms of biological role, part of the Sec protein translocase complex. Interacts with the SecYEG preprotein conducting channel. Has a central role in coupling the hydrolysis of ATP to the transfer of proteins into and across the cell membrane, serving as an ATP-driven molecular motor driving the stepwise translocation of polypeptide chains across the membrane. The chain is Protein translocase subunit SecA from Desulfotalea psychrophila (strain LSv54 / DSM 12343).